The primary structure comprises 525 residues: Probable protein kinase UbiB (525 aa).

One can recognise a Protein kinase domain in the interval 118–500 (EFERVPVASA…QRRTNRLLQA (383 aa)). ATP-binding positions include 124 to 132 (VASASIAQV) and Lys-150. Asp-285 serves as the catalytic Proton acceptor. The chain crosses the membrane as a helical span at residues 501-521 (LLVFGLAVGAGAVIARVLIVL).

Belongs to the ABC1 family. UbiB subfamily.

It is found in the cell inner membrane. The protein operates within cofactor biosynthesis; ubiquinone biosynthesis [regulation]. Its function is as follows. Is probably a protein kinase regulator of UbiI activity which is involved in aerobic coenzyme Q (ubiquinone) biosynthesis. The polypeptide is Probable protein kinase UbiB (Burkholderia mallei (strain SAVP1)).